The primary structure comprises 202 residues: Na(+)-translocating NADH-quinone reductase subunit E (202 aa).

6 consecutive transmembrane segments (helical) span residues 5–25 (VSLF…FLGM), 35–55 (VSTA…TVPL), 81–101 (FLGL…LEMF), 114–134 (GVFL…LFMV), 144–164 (VVYG…LAGI), and 180–200 (LGIT…FGGM).

This sequence belongs to the NqrDE/RnfAE family. Composed of six subunits; NqrA, NqrB, NqrC, NqrD, NqrE and NqrF.

It is found in the cell inner membrane. It catalyses the reaction a ubiquinone + n Na(+)(in) + NADH + H(+) = a ubiquinol + n Na(+)(out) + NAD(+). Its function is as follows. NQR complex catalyzes the reduction of ubiquinone-1 to ubiquinol by two successive reactions, coupled with the transport of Na(+) ions from the cytoplasm to the periplasm. NqrA to NqrE are probably involved in the second step, the conversion of ubisemiquinone to ubiquinol. The protein is Na(+)-translocating NADH-quinone reductase subunit E of Psychrobacter arcticus (strain DSM 17307 / VKM B-2377 / 273-4).